Reading from the N-terminus, the 363-residue chain is Homeobox protein Hox-A2 (363 aa).

Disordered regions lie at residues threonine 23–leucine 133 and methionine 183–lysine 216. Composition is skewed to polar residues over residues threonine 31 to threonine 46 and threonine 55 to serine 78. The Antp-type hexapeptide signature appears at glutamate 88–lysine 93. Positions serine 130–threonine 189 form a DNA-binding region, homeobox.

Belongs to the Antp homeobox family. Proboscipedia subfamily.

It is found in the nucleus. Its function is as follows. Sequence-specific transcription factor which is part of a developmental regulatory system that provides cells with specific positional identities on the anterior-posterior axis. This is Homeobox protein Hox-A2 (HOXA2) from Heterodontus francisci (Horn shark).